The sequence spans 103 residues: Small ribosomal subunit protein uS10 (103 aa).

This sequence belongs to the universal ribosomal protein uS10 family. As to quaternary structure, part of the 30S ribosomal subunit.

Functionally, involved in the binding of tRNA to the ribosomes. This Natranaerobius thermophilus (strain ATCC BAA-1301 / DSM 18059 / JW/NM-WN-LF) protein is Small ribosomal subunit protein uS10.